Reading from the N-terminus, the 1087-residue chain is MGYLQSQKAVSLGDENTDALFKLHTSNRKSANMFGIKSELLNPSELSAVGSYSNDICPNRQSSSSTAADTSPSTNASNTNISFPEQEHKDELFMNVEPKGVGSSMDNHAITIHHSTGNGLLRSSFDHDYRQKNSPRNSIHRLSNISIGNNPIDFESSQQNNPSSLNTSSHHRTSSISNSKSFGTSLSYYNRSSKPSDWNQQNNGGHLSGVISITQDVSSVPLQSSVFSSGNHAYHASMAPKRSGSWRHTNFHSTSHPRAASIGNKSGIPPVPTIPPNIGHSTDHQHPKANISGSLTKSSSESKNLSTIQSPLKTSNSFFKELSPHSQITLSNVKNNHSHVGSQTKSHSFATPSVFDNNKPVSSDNHNNTTTSSQVHPDSRNPDPKAAPKAVSQKTNVDGHRNHEAKHGNTVQNESKSQKSSNKEGRSSRGGFFSRLSFSRSSSRMKKGSKAKHEDAPDVPAIPHAYIADSSTKSSYRNGKKTPTRTKSRMQQFINWFKPSKERSSNGNSDSASPPPVPRLSITRSQVSREPEKPEEIPSVPPLPSNFKDKGHVPQQRSVSYTPKRSSDTSESLQPSLSFASSNVLSEPFDRKVADLAMKAINSKRINKLLDDAKVMQSLLDRACIITPVRNTEVQLINTAPLTEYEQDEINNYDNIYFTGLRNVDKRRSADENTSSNFGFDDERGDYKVVLGDHIAYRYEVVDFLGKGSFGQVLRCIDYETGKLVALKIIRNKKRFHMQALVETKILQKIREWDPLDEYCMVQYTDHFYFRDHLCVATELLGKNLYELIKSNGFKGLPIVVIKSITRQLIQCLTLLNEKHVIHCDLKPENILLCHPFKSQVKVIDFGSSCFEGECVYTYIQSRFYRSPEVILGMGYGTPIDVWSLGCIIAEMYTGFPLFPGENEQEQLACIMEIFGPPDHSLIDKCSRKKVFFDSSGKPRPFVSSKGVSRRPFSKSLHQVLQCKDVSFLSFISDCLKWDPDERMTPQQAAQHDFLTGKQDVRRPNTAPARQKFARPPNIETAPIPRPLPNLPMEYNDHTLPSPKEPSNQASNLVRSSDKFPNLLTNLDYSIISDNGFLRKPVEKSRP.

Disordered stretches follow at residues cysteine 57–isoleucine 81, leucine 120–phenylalanine 182, methionine 238–isoleucine 308, and asparagine 336–serine 578. Positions serine 62–isoleucine 81 are enriched in low complexity. 2 stretches are compositionally biased toward polar residues: residues lysine 132 to leucine 165 and tryptophan 246 to histidine 256. Residues serine 292–threonine 307 are compositionally biased toward low complexity. A compositionally biased stretch (polar residues) spans asparagine 336 to valine 361. Residues serine 362 to serine 373 are compositionally biased toward low complexity. Residues valine 397–histidine 407 are compositionally biased toward basic and acidic residues. Low complexity predominate over residues arginine 429–serine 442. Basic residues predominate over residues asparagine 478–serine 488. Position 513 is a phosphoserine (serine 513). Residues valine 527–glutamate 536 show a composition bias toward basic and acidic residues. The segment covering glutamine 555–serine 578 has biased composition (polar residues). Residues tyrosine 699–leucine 995 enclose the Protein kinase domain. ATP-binding positions include leucine 705–valine 713 and lysine 728. The Proton acceptor role is filled by aspartate 825. Disordered stretches follow at residues histidine 992–glutamine 1011 and proline 1017–serine 1056. Over residues glutamate 1045 to arginine 1055 the composition is skewed to polar residues.

The protein belongs to the protein kinase superfamily. CMGC Ser/Thr protein kinase family. MNB/DYRK subfamily. As to quaternary structure, interacts with rga4. Interacts with tea4; this interaction triggers pom1 plasma membrane association. In terms of processing, autophosphorylates at the cell cortex to lower lipid affinity and promote membrane release. Dephosphorylation by dis2, regulated by tea4, triggers membrane association.

It localises to the cell tip. It is found in the cell membrane. It catalyses the reaction L-seryl-[protein] + ATP = O-phospho-L-seryl-[protein] + ADP + H(+). The catalysed reaction is L-threonyl-[protein] + ATP = O-phospho-L-threonyl-[protein] + ADP + H(+). The enzyme catalyses L-tyrosyl-[protein] + ATP = O-phospho-L-tyrosyl-[protein] + ADP + H(+). In terms of biological role, polarity factor involved in localization of polarized growth and cytokinesis. Forms an intracellular gradient that serves to measure cell length and control mitotic entry. Controls the timing of mitotic commitment by regulating the inhibitory impact of cdr1/cdr2 on wee1 activity. Directly phosphorylates the tail of cdr2 which inhibits cdr2 activation by ssp1. Cdr2 phosphorylation by pom1 also modulates cdr2 association with membranes and inhibits cdr2 interaction with mid1, reducing its clustering ability, possibly via the down-regulation of cdr2 kinase activity. Acts as a negative regulator of mid1 distribution, excluding mid1 from non-growing ends, which prevents division-septum assembly at the cell ends. The pom1 polar gradient also mediates mitotic entry by regulating cdk1. Plays an essential role in proper localization and phosphorylation of a GAP for cdc42, rga4, which ensures bipolar localization of GTP-bound, active cdc42 involved in F-actin formation. Phosphorylates multiple other substrates that function in polarized cell growth, including tea4, mod5, pal1, the Rho GAP rga7, and the Arf GEF syt22. In Schizosaccharomyces pombe (strain 972 / ATCC 24843) (Fission yeast), this protein is DYRK-family kinase pom1.